Reading from the N-terminus, the 498-residue chain is Guanosine-5'-triphosphate,3'-diphosphate pyrophosphatase (498 aa).

The protein belongs to the GppA/Ppx family. GppA subfamily.

It carries out the reaction guanosine 3'-diphosphate 5'-triphosphate + H2O = guanosine 3',5'-bis(diphosphate) + phosphate + H(+). It participates in purine metabolism; ppGpp biosynthesis; ppGpp from GTP: step 2/2. Catalyzes the conversion of pppGpp to ppGpp. Guanosine pentaphosphate (pppGpp) is a cytoplasmic signaling molecule which together with ppGpp controls the 'stringent response', an adaptive process that allows bacteria to respond to amino acid starvation, resulting in the coordinated regulation of numerous cellular activities. This Yersinia enterocolitica serotype O:8 / biotype 1B (strain NCTC 13174 / 8081) protein is Guanosine-5'-triphosphate,3'-diphosphate pyrophosphatase.